The chain runs to 171 residues: Lipoprotein signal peptidase (171 aa).

Helical transmembrane passes span 7 to 27, 64 to 84, and 88 to 108; these read GLIA…WLYF, LGRW…SVWM, and GSRL…GNAI. Catalysis depends on residues Asp118 and Asp136. The helical transmembrane segment at 128 to 148 threads the bilayer; the sequence is SWYVFNVADAAIVAGVVGLIL.

This sequence belongs to the peptidase A8 family.

Its subcellular location is the cell inner membrane. The catalysed reaction is Release of signal peptides from bacterial membrane prolipoproteins. Hydrolyzes -Xaa-Yaa-Zaa-|-(S,diacylglyceryl)Cys-, in which Xaa is hydrophobic (preferably Leu), and Yaa (Ala or Ser) and Zaa (Gly or Ala) have small, neutral side chains.. It functions in the pathway protein modification; lipoprotein biosynthesis (signal peptide cleavage). Its function is as follows. This protein specifically catalyzes the removal of signal peptides from prolipoproteins. The chain is Lipoprotein signal peptidase from Methylorubrum extorquens (strain PA1) (Methylobacterium extorquens).